We begin with the raw amino-acid sequence, 109 residues long: Hainantoxin-XVIII-3 (109 aa).

An N-terminal signal peptide occupies residues 1 to 18 (MKLSIIIIATSLVIAVVA). Residues 19-46 (FPSKDSKAIENDKTEQRMEIVVQETARA) constitute a propeptide that is removed on maturation. Intrachain disulfides connect Cys47/Cys62, Cys55/Cys68, Cys59/Cys108, and Cys61/Cys81.

This sequence belongs to the neurotoxin 25 family. F7 subfamily. Expressed by the venom gland.

The protein localises to the secreted. Functionally, putative ion channel inhibitor. This chain is Hainantoxin-XVIII-3, found in Cyriopagopus hainanus (Chinese bird spider).